Reading from the N-terminus, the 509-residue chain is Apurinic-apyrimidinic endonuclease 1 (509 aa).

The first 24 residues, 1–24, serve as a signal peptide directing secretion; the sequence is MPRHCCCFVFHFLLYMLLINIVKN. The disordered stretch occupies residues 144–188; that stretch reads EEKDEECDEKTKQDNNKENIKNETIVQKKKIDKNNKTKEKIKTKS. Composition is skewed to basic and acidic residues over residues 152 to 164 and 175 to 188; these read EKTK…ENIK and DKNN…KTKS. Zn(2+) contacts are provided by His-291, His-331, Glu-367, Asp-401, His-404, His-438, Asp-451, His-453, and Glu-483. His-404 lines the Mn(2+) pocket. Mn(2+) is bound by residues Asp-451 and His-453.

It belongs to the AP endonuclease 2 family. The cofactor is Zn(2+). It depends on Mn(2+) as a cofactor. In terms of processing, may be proteolytically cleaved.

It is found in the mitochondrion. In terms of biological role, plays a role in mitochondrial DNA base excision repair (BER) pathway induced by oxidative stress. Has apurinic/apyrimidinic (AP) endonuclease activity towards double-stranded DNA (dsDNA) with a preference for C as opposite base. Has 3'-phosphatase activity; removes 3'-phosphate from blunt-end, recessed, and gapped DNA templates and thus, removes 3'-blocks for DNA polymerase activity during BER. Lacks 3'-5' exonuclease activity and does not cleave damaged bases by nucleotide incision repair (NIR). In Plasmodium berghei (strain Anka), this protein is Apurinic-apyrimidinic endonuclease 1.